The primary structure comprises 108 residues: uncharacterized protein (108 aa).

The N-myristoyl glycine; by host moiety is linked to residue Gly2.

This is an uncharacterized protein from Acanthamoeba polyphaga (Amoeba).